A 248-amino-acid polypeptide reads, in one-letter code: 1-(5-phosphoribosyl)-5-[(5-phosphoribosylamino)methylideneamino] imidazole-4-carboxamide isomerase (248 aa).

D8 (proton acceptor) is an active-site residue. The active-site Proton donor is the D129.

Belongs to the HisA/HisF family.

The protein localises to the cytoplasm. It catalyses the reaction 1-(5-phospho-beta-D-ribosyl)-5-[(5-phospho-beta-D-ribosylamino)methylideneamino]imidazole-4-carboxamide = 5-[(5-phospho-1-deoxy-D-ribulos-1-ylimino)methylamino]-1-(5-phospho-beta-D-ribosyl)imidazole-4-carboxamide. It participates in amino-acid biosynthesis; L-histidine biosynthesis; L-histidine from 5-phospho-alpha-D-ribose 1-diphosphate: step 4/9. The sequence is that of 1-(5-phosphoribosyl)-5-[(5-phosphoribosylamino)methylideneamino] imidazole-4-carboxamide isomerase from Rhizobium etli (strain CIAT 652).